Consider the following 56-residue polypeptide: Small ribosomal subunit protein uS14 (56 aa).

4 residues coordinate Zn(2+): Cys-21, Cys-24, Cys-39, and Cys-42.

This sequence belongs to the universal ribosomal protein uS14 family. It depends on Zn(2+) as a cofactor.

The chain is Small ribosomal subunit protein uS14 (RPS29) from Triticum aestivum (Wheat).